Consider the following 189-residue polypeptide: Elongation factor P-like protein (189 aa).

This sequence belongs to the elongation factor P family.

This is Elongation factor P-like protein from Vibrio atlanticus (strain LGP32) (Vibrio splendidus (strain Mel32)).